Consider the following 298-residue polypeptide: Ethanolamine ammonia-lyase small subunit (298 aa).

Adenosylcob(III)alamin-binding residues include V210, E231, and C261.

The protein belongs to the EutC family. The basic unit is a heterodimer which dimerizes to form tetramers. The heterotetramers trimerize; 6 large subunits form a core ring with 6 small subunits projecting outwards. Requires adenosylcob(III)alamin as cofactor.

The protein localises to the bacterial microcompartment. It carries out the reaction ethanolamine = acetaldehyde + NH4(+). Its pathway is amine and polyamine degradation; ethanolamine degradation. Catalyzes the deamination of various vicinal amino-alcohols to oxo compounds. Allows this organism to utilize ethanolamine as the sole source of nitrogen and carbon in the presence of external vitamin B12. The chain is Ethanolamine ammonia-lyase small subunit from Salmonella typhi.